The primary structure comprises 441 residues: Histidinol dehydrogenase (441 aa).

Substrate is bound by residues threonine 240, glutamine 262, and histidine 265. Glutamine 262 and histidine 265 together coordinate Zn(2+). Catalysis depends on proton acceptor residues glutamate 332 and histidine 333. Substrate-binding residues include histidine 333, aspartate 366, glutamate 420, and histidine 425. Zn(2+) is bound at residue aspartate 366. Residue histidine 425 coordinates Zn(2+).

The protein belongs to the histidinol dehydrogenase family. Zn(2+) serves as cofactor.

The catalysed reaction is L-histidinol + 2 NAD(+) + H2O = L-histidine + 2 NADH + 3 H(+). Its pathway is amino-acid biosynthesis; L-histidine biosynthesis; L-histidine from 5-phospho-alpha-D-ribose 1-diphosphate: step 9/9. Catalyzes the sequential NAD-dependent oxidations of L-histidinol to L-histidinaldehyde and then to L-histidine. This Streptomyces avermitilis (strain ATCC 31267 / DSM 46492 / JCM 5070 / NBRC 14893 / NCIMB 12804 / NRRL 8165 / MA-4680) protein is Histidinol dehydrogenase.